The primary structure comprises 325 residues: Heat-inducible transcription repressor HrcA (325 aa).

The protein belongs to the HrcA family.

Functionally, negative regulator of class I heat shock genes (grpE-dnaK-dnaJ and groELS operons). Prevents heat-shock induction of these operons. The chain is Heat-inducible transcription repressor HrcA from Staphylococcus aureus (strain bovine RF122 / ET3-1).